Here is a 112-residue protein sequence, read N- to C-terminus: UPF0060 membrane protein Daro_2632 (112 aa).

Helical transmembrane passes span 7–27 (VLGL…LPWL), 34–54 (PVWL…LLTL), 59–79 (AGRI…IWLW), and 89–109 (WDLV…LQPA).

It belongs to the UPF0060 family.

Its subcellular location is the cell inner membrane. This Dechloromonas aromatica (strain RCB) protein is UPF0060 membrane protein Daro_2632.